A 105-amino-acid polypeptide reads, in one-letter code: Insulin (105 aa).

The first 22 residues, 1–22, serve as a signal peptide directing secretion; it reads MAFWLQAASLLVLLALSPGVDA. 3 disulfide bridges follow: cysteine 29–cysteine 91, cysteine 41–cysteine 104, and cysteine 90–cysteine 95. Positions 53-82 are cleaved as a propeptide — c peptide; sequence DVDPLIGFLSPKSAKENEEYPFKDQTEMMV.

It belongs to the insulin family. Heterodimer of a B chain and an A chain linked by two disulfide bonds.

It is found in the secreted. In terms of biological role, insulin decreases blood glucose concentration. It increases cell permeability to monosaccharides, amino acids and fatty acids. It accelerates glycolysis, the pentose phosphate cycle, and glycogen synthesis in liver. In Oncorhynchus keta (Chum salmon), this protein is Insulin (ins).